The primary structure comprises 181 residues: Early upstream open reading frame (181 aa).

It belongs to the EUO family.

This chain is Early upstream open reading frame, found in Chlamydia caviae (strain ATCC VR-813 / DSM 19441 / 03DC25 / GPIC) (Chlamydophila caviae).